A 350-amino-acid chain; its full sequence is ADP-ribose pyrophosphatase, mitochondrial (350 aa).

The transit peptide at 1–46 (MAGRSLGKAVATVSLSVALASVTVRSSGCRAIPAPRNPFPSCGFHL) directs the protein to the mitochondrion. 2 disordered regions span residues 53-77 (GSNG…KVER) and 116-153 (SESS…PAGR). A Phosphoserine modification is found at Ser121. Positions 124–135 (FNEKDGHVERKS) are enriched in basic and acidic residues. Residues 178-334 (WKRDESGNKI…SQFIKLVAEK (157 aa)) enclose the Nudix hydrolase domain. The short motif at 215-237 (GMVDPGEKISATLKREFGEEALN) is the Nudix box element.

The protein belongs to the Nudix hydrolase family. NudF subfamily. Monomer. Interacts with GLOD4. Requires Mg(2+) as cofactor. The cofactor is Mn(2+).

It localises to the mitochondrion. The catalysed reaction is ADP-D-ribose + H2O = D-ribose 5-phosphate + AMP + 2 H(+). Its function is as follows. Hydrolyzes ADP-ribose (ADPR) to AMP and ribose 5'-phosphate. The chain is ADP-ribose pyrophosphatase, mitochondrial (Nudt9) from Rattus norvegicus (Rat).